A 512-amino-acid chain; its full sequence is Lysine--tRNA ligase (512 aa).

Mg(2+) contacts are provided by E408 and E415.

This sequence belongs to the class-II aminoacyl-tRNA synthetase family. Homodimer. Mg(2+) serves as cofactor.

Its subcellular location is the cytoplasm. It catalyses the reaction tRNA(Lys) + L-lysine + ATP = L-lysyl-tRNA(Lys) + AMP + diphosphate. The sequence is that of Lysine--tRNA ligase from Prochlorococcus marinus (strain MIT 9515).